A 400-amino-acid polypeptide reads, in one-letter code: Elongation factor Tu (400 aa).

One can recognise a tr-type G domain in the interval 10 to 209 (KPHVNIGTIG…AVDKYIPTPQ (200 aa)). Residues 19–26 (GHVDHGKT) are G1. GTP is bound at residue 19 to 26 (GHVDHGKT). Thr-26 serves as a coordination point for Mg(2+). The tract at residues 60-64 (GITIN) is G2. The segment at 81–84 (DCPG) is G3. Residues 81–85 (DCPGH) and 136–139 (NKVD) contribute to the GTP site. Residues 136 to 139 (NKVD) are G4. The G5 stretch occupies residues 174 to 176 (SAL).

Belongs to the TRAFAC class translation factor GTPase superfamily. Classic translation factor GTPase family. EF-Tu/EF-1A subfamily. As to quaternary structure, monomer.

The protein resides in the cytoplasm. It carries out the reaction GTP + H2O = GDP + phosphate + H(+). GTP hydrolase that promotes the GTP-dependent binding of aminoacyl-tRNA to the A-site of ribosomes during protein biosynthesis. In Caldicellulosiruptor bescii (strain ATCC BAA-1888 / DSM 6725 / KCTC 15123 / Z-1320) (Anaerocellum thermophilum), this protein is Elongation factor Tu.